We begin with the raw amino-acid sequence, 490 residues long: 53 kDa membrane antigen A (490 aa).

A signal peptide spans 1 to 16 (MKKKLFFALLVLILSS). Cysteine 17 carries N-palmitoyl cysteine lipidation. Residue cysteine 17 is the site of S-diacylglycerol cysteine attachment.

It localises to the cell membrane. This Treponema denticola protein is 53 kDa membrane antigen A (tdpA).